The primary structure comprises 559 residues: Alkaline phosphatase PhoK (559 aa).

The signal sequence occupies residues 1 to 19 (MLKHVAAALLLATAMPVVA). Zn(2+)-binding residues include Asp-49 and Thr-89. The Phosphothreonine intermediate role is filled by Thr-89. An intrachain disulfide couples Cys-90 to Cys-126. Substrate is bound by residues Asn-110 and 171-173 (KDR). Cys-231 and Cys-314 are joined by a disulfide. Zn(2+) is bound by residues Asp-300, His-304, Asp-345, His-346, and His-491. Cys-545 and Cys-556 are disulfide-bonded.

Monomer. The cofactor is Zn(2+).

It localises to the secreted. It carries out the reaction a phosphate monoester + H2O = an alcohol + phosphate. Alkaline phosphatase with broad substrate specificity. Precipitates uranium from alkaline solutions. This is Alkaline phosphatase PhoK from Sphingomonas sp.